The primary structure comprises 270 residues: Interleukin-1 alpha (270 aa).

Residues 1 to 114 constitute a propeptide that is removed on maturation; that stretch reads MAKVPDLFED…HDLEETIQPR (114 aa). A glycan (N-linked (GlcNAc...) asparagine) is linked at Asn64. At Lys85 the chain carries N6-acetyllysine. The nuclear localization signal (NLS) stretch occupies residues 85-89; it reads KKRRL. The residue at position 90 (Ser90) is a Phosphoserine. Asn139 and Asn143 each carry an N-linked (GlcNAc...) asparagine glycan.

This sequence belongs to the IL-1 family. In terms of assembly, monomer. Interacts with TMED10; the interaction mediates the translocation from the cytoplasm into the ERGIC (endoplasmic reticulum-Golgi intermediate compartment) and thereby secretion. Interacts with IL1R1. Interacts with S100A13; this interaction is the first step in the export of IL1A, followed by direct translocation of this complex across the plasma membrane. Post-translationally, acetylated within its nuclear localization sequence, which impacts subcellular localization. Proteolytic processed by CAPN1 in a calcium-dependent manner. Cleavage from 31 kDa precursor to 18 kDa biologically active molecules. In terms of processing, phosphorylated. Phosphorylation greatly enhances susceptibility to digestion and promotes the conversion of pre-IL1A alpha to the biologically active IL1A.

The protein localises to the nucleus. The protein resides in the cytoplasm. Its subcellular location is the secreted. In terms of biological role, cytokine constitutively present intracellularly in nearly all resting non-hematopoietic cells that plays an important role in inflammation and bridges the innate and adaptive immune systems. After binding to its receptor IL1R1 together with its accessory protein IL1RAP, forms the high affinity interleukin-1 receptor complex. Signaling involves the recruitment of adapter molecules such as MYD88, IRAK1 or IRAK4. In turn, mediates the activation of NF-kappa-B and the three MAPK pathways p38, p42/p44 and JNK pathways. Within the cell, acts as an alarmin and cell death results in its liberation in the extracellular space after disruption of the cell membrane to induce inflammation and alert the host to injury or damage. In addition to its role as a danger signal, which occurs when the cytokine is passively released by cell necrosis, directly senses DNA damage and acts as a signal for genotoxic stress without loss of cell integrity. This Mus musculus (Mouse) protein is Interleukin-1 alpha.